Reading from the N-terminus, the 1213-residue chain is Hybrid signal transduction histidine kinase K (1213 aa).

Disordered stretches follow at residues 1–37 (MIEL…NKTN), 98–189 (NNNY…SSSS), 279–392 (NKNV…IPFR), and 495–565 (TTEQ…NYNN). 6 stretches are compositionally biased toward low complexity: residues 98–162 (NNNY…QKDQ), 171–189 (SLSS…SSSS), 279–331 (NKNV…NSGA), 339–371 (NNNN…SNNN), 498–511 (QQQQ…QQQQ), and 522–565 (QRQQ…NYNN). Helical transmembrane passes span 600 to 618 (IIFN…GSNI), 628 to 648 (LIIG…IFFW), 652 to 672 (INKP…SLVI), 676 to 696 (TGSI…ALTI), 729 to 749 (IQWS…NLYG), and 768 to 788 (IIDV…QYFI). The region spanning 822-1052 (TMSHEIRTPL…TFWFILPLEE (231 aa)) is the Histidine kinase domain. His-825 is subject to Phosphohistidine; by autocatalysis. The Response regulatory domain maps to 1076–1199 (KVLIAEDNII…QLRSAIEMAI (124 aa)). At Asp-1125 the chain carries 4-aspartylphosphate.

In terms of processing, activation probably requires transfer of a phosphate group between a histidine in the kinase core (transmitter) domain and an aspartate of the receiver domain.

It is found in the nucleus membrane. The catalysed reaction is ATP + protein L-histidine = ADP + protein N-phospho-L-histidine.. Functionally, involved in a signal transduction pathway that regulates morphogenesis and controls entry into the culmination stage. May act via the regA pathway, being activated by a morphogenesis-stimulated ligand, reducing phosphodiesterase regA levels and allowing cAMP level to rise to promote the culmination stage. This protein probably undergoes an ATP-dependent autophosphorylation at a conserved histidine residue in the kinase core, and a phosphoryl group is then transferred to a conserved aspartate residue in the receiver domain. In Dictyostelium discoideum (Social amoeba), this protein is Hybrid signal transduction histidine kinase K (dhkK).